The following is a 335-amino-acid chain: Cell division protein ZipA (335 aa).

Over 1–4 (MDLN) the chain is Periplasmic. The helical transmembrane segment at 5–25 (AILIILGVIALIILVAHGIWS) threads the bilayer. Residues 26-335 (NRREKSQYFE…AERDYLARVS (310 aa)) are Cytoplasmic-facing.

The protein belongs to the ZipA family. In terms of assembly, interacts with FtsZ via their C-terminal domains.

The protein localises to the cell inner membrane. Essential cell division protein that stabilizes the FtsZ protofilaments by cross-linking them and that serves as a cytoplasmic membrane anchor for the Z ring. Also required for the recruitment to the septal ring of downstream cell division proteins. The polypeptide is Cell division protein ZipA (Histophilus somni (strain 2336) (Haemophilus somnus)).